The chain runs to 302 residues: UDP-3-O-acyl-N-acetylglucosamine deacetylase (302 aa).

Zn(2+) is bound by residues His-82, His-238, and Asp-242. His-265 acts as the Proton donor in catalysis.

It belongs to the LpxC family. Zn(2+) is required as a cofactor.

The catalysed reaction is a UDP-3-O-[(3R)-3-hydroxyacyl]-N-acetyl-alpha-D-glucosamine + H2O = a UDP-3-O-[(3R)-3-hydroxyacyl]-alpha-D-glucosamine + acetate. The protein operates within glycolipid biosynthesis; lipid IV(A) biosynthesis; lipid IV(A) from (3R)-3-hydroxytetradecanoyl-[acyl-carrier-protein] and UDP-N-acetyl-alpha-D-glucosamine: step 2/6. In terms of biological role, catalyzes the hydrolysis of UDP-3-O-myristoyl-N-acetylglucosamine to form UDP-3-O-myristoylglucosamine and acetate, the committed step in lipid A biosynthesis. This Leptospira biflexa serovar Patoc (strain Patoc 1 / Ames) protein is UDP-3-O-acyl-N-acetylglucosamine deacetylase.